A 152-amino-acid polypeptide reads, in one-letter code: UPF0756 membrane protein Daud_1310 (152 aa).

Helical transmembrane passes span 14–34 (LVGV…LLFI), 51–71 (LELG…NGKI), 76–96 (IIYN…ALAT), and 112–132 (IIFG…GMPV).

It belongs to the UPF0756 family.

It is found in the cell membrane. In Desulforudis audaxviator (strain MP104C), this protein is UPF0756 membrane protein Daud_1310.